A 380-amino-acid polypeptide reads, in one-letter code: Cytochrome b (380 aa).

A run of 4 helical transmembrane segments spans residues 33 to 53, 77 to 98, 113 to 133, and 178 to 198; these read FGSLLGLCLAAQILTGLFLAM, WLIRSMHANGASFFFICIYLHI, WNIGVILLLLVMMTAFVGYVL, and FFAFHFLFPFVIAAMTMIHLI. Positions 83 and 97 each coordinate heme b. Positions 182 and 196 each coordinate heme b. Residue His-201 participates in a ubiquinone binding. The next 4 helical transmembrane spans lie at 226 to 246, 288 to 308, 320 to 340, and 347 to 367; these read YKDLLGFAILLIALITLALFS, LGGVLALLFSILILMLVPVLH, FSQFLFWLLVANVAILTWIGG, and FIIIGQIASFLYFFIFLILVP.

It belongs to the cytochrome b family. As to quaternary structure, the cytochrome bc1 complex contains 3 respiratory subunits (MT-CYB, CYC1 and UQCRFS1), 2 core proteins (UQCRC1 and UQCRC2) and probably 6 low-molecular weight proteins. It depends on heme b as a cofactor.

It localises to the mitochondrion inner membrane. In terms of biological role, component of the ubiquinol-cytochrome c reductase complex (complex III or cytochrome b-c1 complex) that is part of the mitochondrial respiratory chain. The b-c1 complex mediates electron transfer from ubiquinol to cytochrome c. Contributes to the generation of a proton gradient across the mitochondrial membrane that is then used for ATP synthesis. The polypeptide is Cytochrome b (mt-cyb) (Astronotus ocellatus (Oscar)).